Consider the following 614-residue polypeptide: Kelch-like protein 40 (614 aa).

The BTB domain occupies 33–100 (IDCVLKIQGK…IYTSEIEITE (68 aa)). Residues 135–237 (CLAIFRLGLL…PQDYIKNKVE (103 aa)) enclose the BACK domain. Kelch repeat units follow at residues 353 to 405 (QLFV…ESDN), 406 to 455 (SIYL…SHDN), 456 to 503 (LVYV…VHKG), 505 to 550 (ILIA…SMNG), and 552 to 606 (LYAI…AARL).

The protein belongs to the KLHL40 family. As to quaternary structure, component of the BCR(KLHL40) E3 ubiquitin ligase complex.

Its subcellular location is the cytoplasm. It localises to the myofibril. The protein localises to the sarcomere. The protein resides in the a band. It is found in the i band. Its function is as follows. Substrate-specific adapter of a BCR (BTB-CUL3-RBX1) E3 ubiquitin ligase complex that acts as a key regulator of skeletal muscle development. This Xenopus tropicalis (Western clawed frog) protein is Kelch-like protein 40 (klhl40).